The following is a 297-amino-acid chain: Bifunctional protein FolD (297 aa).

Residues 164–166 (GRS), Ser193, and Ile234 each bind NADP(+).

It belongs to the tetrahydrofolate dehydrogenase/cyclohydrolase family. As to quaternary structure, homodimer.

It carries out the reaction (6R)-5,10-methylene-5,6,7,8-tetrahydrofolate + NADP(+) = (6R)-5,10-methenyltetrahydrofolate + NADPH. It catalyses the reaction (6R)-5,10-methenyltetrahydrofolate + H2O = (6R)-10-formyltetrahydrofolate + H(+). It participates in one-carbon metabolism; tetrahydrofolate interconversion. Functionally, catalyzes the oxidation of 5,10-methylenetetrahydrofolate to 5,10-methenyltetrahydrofolate and then the hydrolysis of 5,10-methenyltetrahydrofolate to 10-formyltetrahydrofolate. In Halobacterium salinarum (strain ATCC 700922 / JCM 11081 / NRC-1) (Halobacterium halobium), this protein is Bifunctional protein FolD.